Reading from the N-terminus, the 376-residue chain is T-box transcription factor 18 (376 aa).

Over residues 38 to 63 (STSRPSSSSPPSLPAVSSELLSSSFP) the composition is skewed to low complexity. The disordered stretch occupies residues 38-76 (STSRPSSSSPPSLPAVSSELLSSSFPTNAPESSSRDLAP). A DNA-binding region (T-box) is located at residues 171-364 (LANQEQWAKF…GNKYCRTDRK (194 aa)).

It localises to the nucleus. Functionally, transcriptional regulator involved in developmental processes. Directly binds to the promoter region of the sex-determining factor xol-1 to activate its transcription. Its activation of xol-1 transcription controls sex determination and X chromosome dosage compensation to promote male development. Has a role in the fox-1-sex-1-mediated determination of sexual fate. The chain is T-box transcription factor 18 from Caenorhabditis elegans.